The primary structure comprises 463 residues: SH3 domain-binding protein 5 (463 aa).

Over residues 1–12 the composition is skewed to basic and acidic residues; the sequence is MDTALKRSRSDE. Residues 1-69 are disordered; that stretch reads MDTALKRSRS…DDINRRETEL (69 aa). A compositionally biased stretch (acidic residues) spans 25 to 44; it reads EKEEEEERMEQGLEEEEEEV. Residues 33–268 are sufficient for interaction with RAB11A and for guanine nucleotide exchange activity; sequence MEQGLEEEEE…EIHERRRSNA (236 aa). Residues 45–54 are compositionally biased toward basic and acidic residues; the sequence is DPRIQGELEK. Coiled coils occupy residues 47-93, 100-148, 157-203, and 214-258; these read RIQG…LAKK, DSKP…RLLE, AWQE…LEKK, and YFEL…RISD. The span at 309–320 shows a compositional bias: acidic residues; that stretch reads NCSNLVSEDDSE. Positions 309-348 are disordered; the sequence is NCSNLVSEDDSETQSVSSFSSGPTSPSEMPDQFPAVARPG. Residues 323 to 335 show a composition bias toward low complexity; it reads SVSSFSSGPTSPS. Serine 354 is modified (phosphoserine; by MAPK12 and MAPK9). The tract at residues 372-429 is disordered; sequence SECSGASSPECEVERGDRAEGAENKMSDKANNNRVLGSTNGGSGRSRSQSSTSLESQA. 2 positions are modified to phosphoserine: serine 378 and serine 379. Over residues 383–399 the composition is skewed to basic and acidic residues; it reads EVERGDRAEGAENKMSD. The segment covering 416 to 428 has biased composition (low complexity); sequence RSRSQSSTSLESQ. Phosphoserine occurs at positions 421 and 424.

It belongs to the SH3BP5 family. As to quaternary structure, interacts with BTK. Interacts with all isoforms of MAPK8, MAPK9, MAPK10 and MAPK12. Interacts with GDP-bound and nucleotide-free forms of RAB11A.

The protein resides in the cytoplasmic vesicle membrane. It localises to the mitochondrion. In terms of biological role, functions as a guanine nucleotide exchange factor (GEF) with specificity for RAB11A and RAB25. Inhibits the auto- and transphosphorylation activity of BTK. Plays a negative regulatory role in BTK-related cytoplasmic signaling in B-cells. May be involved in BCR-induced apoptotic cell death. The protein is SH3 domain-binding protein 5 (Sh3bp5) of Mus musculus (Mouse).